A 216-amino-acid chain; its full sequence is ATP-dependent Clp protease proteolytic subunit (216 aa).

The active-site Nucleophile is the S101. H126 is a catalytic residue.

The protein belongs to the peptidase S14 family. In terms of assembly, component of the chloroplastic Clp protease core complex.

It is found in the plastid. It localises to the chloroplast stroma. It catalyses the reaction Hydrolysis of proteins to small peptides in the presence of ATP and magnesium. alpha-casein is the usual test substrate. In the absence of ATP, only oligopeptides shorter than five residues are hydrolyzed (such as succinyl-Leu-Tyr-|-NHMec, and Leu-Tyr-Leu-|-Tyr-Trp, in which cleavage of the -Tyr-|-Leu- and -Tyr-|-Trp bonds also occurs).. In terms of biological role, cleaves peptides in various proteins in a process that requires ATP hydrolysis. Has a chymotrypsin-like activity. Plays a major role in the degradation of misfolded proteins. This chain is ATP-dependent Clp protease proteolytic subunit, found in Saccharum hybrid (Sugarcane).